We begin with the raw amino-acid sequence, 859 residues long: DNA mismatch repair protein MutS (859 aa).

Position 622–629 (622–629 (GPNMGGKS)) interacts with ATP.

This sequence belongs to the DNA mismatch repair MutS family.

This protein is involved in the repair of mismatches in DNA. It is possible that it carries out the mismatch recognition step. This protein has a weak ATPase activity. The protein is DNA mismatch repair protein MutS of Syntrophomonas wolfei subsp. wolfei (strain DSM 2245B / Goettingen).